A 431-amino-acid chain; its full sequence is Glutamate--tRNA ligase 1 (431 aa).

A 'HIGH' region motif is present at residues 6–16; that stretch reads PSPTGDMHIGN. The short motif at 235 to 239 is the 'KMSKS' region element; it reads KMSKR. Residue lysine 238 participates in ATP binding.

Belongs to the class-I aminoacyl-tRNA synthetase family. Glutamate--tRNA ligase type 1 subfamily. Monomer.

The protein localises to the cytoplasm. The catalysed reaction is tRNA(Glu) + L-glutamate + ATP = L-glutamyl-tRNA(Glu) + AMP + diphosphate. Catalyzes the attachment of glutamate to tRNA(Glu) in a two-step reaction: glutamate is first activated by ATP to form Glu-AMP and then transferred to the acceptor end of tRNA(Glu). The protein is Glutamate--tRNA ligase 1 of Campylobacter jejuni subsp. jejuni serotype O:2 (strain ATCC 700819 / NCTC 11168).